A 106-amino-acid polypeptide reads, in one-letter code: MLNDLKIEELLDKVDSRYGLVVATAKRARQINEYTATLGLNESLGIPGPQVHTRSQHPLTIAIEELRAGKLKVGFREPAREAAEPAGEAPEEQQRAAGEREDQGAA.

The disordered stretch occupies residues Arg-76–Ala-106. Basic and acidic residues predominate over residues Glu-92–Ala-106.

This sequence belongs to the RNA polymerase subunit omega family. As to quaternary structure, the RNAP catalytic core consists of 2 alpha, 1 beta, 1 beta' and 1 omega subunit. When a sigma factor is associated with the core the holoenzyme is formed, which can initiate transcription.

It catalyses the reaction RNA(n) + a ribonucleoside 5'-triphosphate = RNA(n+1) + diphosphate. Promotes RNA polymerase assembly. Latches the N- and C-terminal regions of the beta' subunit thereby facilitating its interaction with the beta and alpha subunits. In Rubrobacter xylanophilus (strain DSM 9941 / JCM 11954 / NBRC 16129 / PRD-1), this protein is DNA-directed RNA polymerase subunit omega.